A 369-amino-acid polypeptide reads, in one-letter code: Probable methyltransferase TCM_000331 (369 aa).

7 residues coordinate S-adenosyl-L-homocysteine: Tyr18, Cys60, Asn65, Asp98, Leu99, Ser137, and Phe138. Mg(2+)-binding residues include Asn176, Asp261, Phe263, and Asn264.

Belongs to the methyltransferase superfamily. Type-7 methyltransferase family. Mg(2+) serves as cofactor.

The sequence is that of Probable methyltransferase TCM_000331 from Theobroma cacao (Cacao).